The sequence spans 238 residues: Ureidoacrylate amidohydrolase RutB (238 aa).

The Proton acceptor role is filled by aspartate 35. The active site involves lysine 144. Cysteine 177 serves as the catalytic Nucleophile.

It belongs to the isochorismatase family. RutB subfamily.

It catalyses the reaction (Z)-3-ureidoacrylate + H2O + H(+) = (Z)-3-aminoacrylate + NH4(+) + CO2. The enzyme catalyses (Z)-3-ureidoacrylate + H2O = (Z)-3-aminoacrylate + carbamate + H(+). The catalysed reaction is (Z)-2-methylureidoacrylate + H2O + H(+) = (Z)-2-methylaminoacrylate + NH4(+) + CO2. Its function is as follows. Hydrolyzes ureidoacrylate to form aminoacrylate and carbamate. The carbamate hydrolyzes spontaneously, thereby releasing one of the nitrogen atoms of the pyrimidine ring as ammonia and one of its carbon atoms as CO2. This chain is Ureidoacrylate amidohydrolase RutB, found in Caulobacter vibrioides (strain NA1000 / CB15N) (Caulobacter crescentus).